Here is a 222-residue protein sequence, read N- to C-terminus: Large ribosomal subunit protein uL11c (222 aa).

The disordered stretch occupies residues 1-20; that stretch reads MASSSLSTLCSSTSSSLHPN. The N-terminal 62 residues, 1-62, are a transit peptide targeting the chloroplast; sequence MASSSLSTLC…TPRFLTVIAM (62 aa).

This sequence belongs to the universal ribosomal protein uL11 family. In terms of assembly, part of the ribosomal stalk of the 50S ribosomal subunit. Interacts with L10 and the large rRNA to form the base of the stalk. L10 forms an elongated spine to which L12 dimers bind in a sequential fashion forming a multimeric L10(L12)X complex.

It is found in the plastid. It localises to the chloroplast. Functionally, forms part of the ribosomal stalk which helps the ribosome interact with GTP-bound translation factors. This chain is Large ribosomal subunit protein uL11c (RPL11), found in Arabidopsis thaliana (Mouse-ear cress).